The sequence spans 416 residues: Protein-lysine N-trimethyltransferase SMYD5 (416 aa).

Residues 21–351 (GSVEVRYVDS…PGEEICISYL (331 aa)) enclose the SET domain. The MYND-type zinc-finger motif lies at 98-136 (PELCSVRKDLHQNCPHCQVMYCSAECRLAAAEQYHQILC). An S-adenosyl-L-methionine-binding site is contributed by Tyr-350. The segment at 383–416 (EADDPNVTSEEEEEEDEEEGEPEDAELGDEMTDV) is disordered.

This sequence belongs to the class V-like SAM-binding methyltransferase superfamily. Interacts with the N-CoR complex. Interacts with EHMT2 and CBX5. Ubiquitinated and degradaed by the proteasome in response to mild hypothermia (32 degrees Celsius), relieving repression of the SP1 gene.

It localises to the cytoplasm. It carries out the reaction L-lysyl-[protein] + 3 S-adenosyl-L-methionine = N(6),N(6),N(6)-trimethyl-L-lysyl-[protein] + 3 S-adenosyl-L-homocysteine + 3 H(+). The catalysed reaction is L-lysyl(20)-[histone H4] + 3 S-adenosyl-L-methionine = N(6),N(6),N(6)-trimethyl-L-lysyl(20)-[histone H4] + 3 S-adenosyl-L-homocysteine + 3 H(+). It catalyses the reaction L-lysyl(36)-[histone H3] + 3 S-adenosyl-L-methionine = N(6),N(6),N(6)-trimethyl-L-lysyl(36)-[histone H3] + 3 S-adenosyl-L-homocysteine + 3 H(+). Protein-lysine N-trimethyltransferase that specifically catalyzes trimethylation of 'Lys-22' of the RPL40/eL40 subunit of the 60S ribosome, thereby promoting translation elongation and protein synthesis. May also act as a histone methyltransferase in the context of histone octamers, but not on nucleosome substrates: trimethylates 'Lys-36' of histone H3 and 'Lys-20' of histone H4 to form H3K36me3 and H4K20me3, respectively. The histone methyltransferase activity, which is independent of its SET domain, is however unsure in vivo. In association with the NCoR corepressor complex, involved in the repression of toll-like receptor 4 (TLR4)-target inflammatory genes in macrophages, possibly by catalyzing the formation of H4K20me3 at the gene promoters. Plays an important role in embryonic stem (ES) cell self-renewal and differentiation. Maintains genome stability of ES cells during differentiation through regulation of heterochromatin formation and repression of endogenous repetitive DNA elements by promoting H4K20me3 marks. Acts as a regulator of the hypothermia response: its degradation in response to mild hypothermia relieves the formation of H3K36me3 at gene promoters, allowing expression of the neuroprotective gene SP1. This is Protein-lysine N-trimethyltransferase SMYD5 from Mus musculus (Mouse).